Here is a 172-residue protein sequence, read N- to C-terminus: Diphosphoinositol polyphosphate phosphohydrolase 1 (172 aa).

M1 carries the post-translational modification N-acetylmethionine. Substrate contacts are provided by residues R10, 18–20 (KKR), and 39–41 (SSR). The Nudix hydrolase domain maps to 17–144 (YKKRAACLCF…VQASYFETLR (128 aa)). The Mg(2+) site is built by G50 and E66. A Nudix box motif is present at residues 51–72 (GGMEPEEEPGTAAVREVCEEAG). E69 functions as the Proton acceptor in the catalytic mechanism. E70 contacts Mg(2+). Substrate is bound by residues 89 to 91 (RKH), R115, and K133.

Belongs to the Nudix hydrolase family. DIPP subfamily. In terms of assembly, monomer. The cofactor is Mg(2+). Mn(2+) is required as a cofactor. Zn(2+) serves as cofactor.

It localises to the cytoplasm. It is found in the nucleus. The catalysed reaction is diphospho-myo-inositol polyphosphate + H2O = myo-inositol polyphosphate + phosphate.. It carries out the reaction 5-diphospho-1D-myo-inositol 1,2,3,4,6-pentakisphosphate + H2O = 1D-myo-inositol hexakisphosphate + phosphate + H(+). It catalyses the reaction 3,5-bis(diphospho)-1D-myo-inositol 1,2,4,6-tetrakisphosphate + H2O = 3-diphospho-1D-myo-inositol 1,2,4,5,6-pentakisphosphate + phosphate + 2 H(+). The enzyme catalyses [phosphate](n+1) + n H2O = (n+1) phosphate + n H(+). The catalysed reaction is P(1),P(5)-bis(5'-adenosyl) pentaphosphate + H2O = ADP + ATP + 2 H(+). It carries out the reaction P(1),P(6)-bis(5'-adenosyl) hexaphosphate + H2O = 2 ATP + 2 H(+). It catalyses the reaction P(1),P(4)-bis(5'-adenosyl) tetraphosphate + H2O = AMP + ATP + 2 H(+). The enzyme catalyses a 5'-end (N(7)-methyl 5'-triphosphoguanosine)-ribonucleoside in mRNA + H2O = N(7)-methyl-GMP + a 5'-end diphospho-ribonucleoside in mRNA + 2 H(+). The catalysed reaction is a 5'-end (N(7)-methyl 5'-triphosphoguanosine)-ribonucleoside in mRNA + H2O = N(7)-methyl-GDP + a 5'-end phospho-ribonucleoside in mRNA + 2 H(+). Cleaves a beta-phosphate from the diphosphate groups in PP-InsP5 (diphosphoinositol pentakisphosphate) and [PP]2-InsP4 (bisdiphosphoinositol tetrakisphosphate), suggesting that it may play a role in signal transduction. InsP6 (inositol hexakisphosphate) is not a substrate. Also able to catalyze the hydrolysis of dinucleoside oligophosphates, with diadenosine 5',5'''-P1,P6-hexaphosphate (Ap6A) and diadenosine 5',5'''- P1,P5-pentaphosphate (Ap5A) being the preferred substrates. The major reaction products are ADP and p4a from Ap6A and ADP and ATP from Ap5A. Also able to hydrolyze 5- phosphoribose 1-diphosphate. Acts as a decapping enzyme that can hydrolyze both monomethylated and unmethylated capped RNAs. Hydrolyzes monomethylated capped RNA after both the alpha- and beta-phosphates generating m7GMP + ppRNA and m7GDP + pRNA. Modulates the stability of a subset of mRNAs implicated in cell motility. Divalent cations zinc, magnesium and manganese determine its substrate specificity. Exhibits diphosphoinositol polyphosphate phosphohydrolase in the presence of magnesium ions, diadenosine hexaphosphate hydrolase activity in the presence of manganese ions and endopolyphosphatase activity in the presence of zinc ions. Plays an important role in limiting DNA damage and maintaining cell survival upon oxidative stress via its endopolyphosphatase activity. The chain is Diphosphoinositol polyphosphate phosphohydrolase 1 from Bos taurus (Bovine).